The sequence spans 847 residues: Pep5-like zinc finger protein C16A10.03c (847 aa).

One copy of the CHCR repeat lies at 387 to 526 (YIEAIPFSDS…GIWLFNSDPM (140 aa)). The RING-type; atypical zinc finger occupies 780–814 (CDNCEGLLDVPFVSYSCLHLVHRDCATETVCPKCK).

It localises to the cytoplasm. The protein localises to the nucleus. The chain is Pep5-like zinc finger protein C16A10.03c from Schizosaccharomyces pombe (strain 972 / ATCC 24843) (Fission yeast).